A 276-amino-acid chain; its full sequence is Type II pantothenate kinase (276 aa).

8 to 15 is a binding site for ATP; sequence DAGGTLTK. The active-site Proton acceptor is glutamate 76. ATP contacts are provided by residues threonine 105, 127 to 131, phenylalanine 143, and serine 230; that span reads GGTIM.

The protein belongs to the type II pantothenate kinase family. Homodimer.

It is found in the cytoplasm. The catalysed reaction is (R)-pantothenate + ATP = (R)-4'-phosphopantothenate + ADP + H(+). It functions in the pathway cofactor biosynthesis; coenzyme A biosynthesis; CoA from (R)-pantothenate: step 1/5. Catalyzes the phosphorylation of pantothenate (Pan), the first step in CoA biosynthesis. This is Type II pantothenate kinase from Bacillus anthracis.